Here is a 450-residue protein sequence, read N- to C-terminus: Probable galactarate/D-glucarate transporter GudP (450 aa).

The Cytoplasmic segment spans residues M1–W20. A helical membrane pass occupies residues I21–I41. At A42–G58 the chain is on the periplasmic side. A helical transmembrane segment spans residues Y59–L79. Residues D80–K85 are Cytoplasmic-facing. A helical membrane pass occupies residues R86–V105. Residues D106–S109 lie on the Periplasmic side of the membrane. The chain crosses the membrane as a helical span at residues G110–F132. Over P133–S153 the chain is Cytoplasmic. A helical transmembrane segment spans residues I154–T174. Topologically, residues H175–E176 are periplasmic. Residues V177–W197 form a helical membrane-spanning segment. Topologically, residues L198–M254 are cytoplasmic. The chain crosses the membrane as a helical span at residues I255–F275. Over P276–A290 the chain is Periplasmic. Residues G291–I311 traverse the membrane as a helical segment. At S312–P329 the chain is on the cytoplasmic side. Residues I330–W350 traverse the membrane as a helical segment. Position 351 (M351) is a topological domain, periplasmic. A helical transmembrane segment spans residues I352–V372. Residues M373 to G387 lie on the Cytoplasmic side of the membrane. The chain crosses the membrane as a helical span at residues L388–V408. Over G409–N415 the chain is Periplasmic. Residues G416–V436 traverse the membrane as a helical segment. The Cytoplasmic portion of the chain corresponds to G437–Q450.

Belongs to the major facilitator superfamily. Phthalate permease family.

The protein resides in the cell inner membrane. It catalyses the reaction galactarate(in) + H(+)(in) = galactarate(out) + H(+)(out). It carries out the reaction D-glucarate(in) + H(+)(in) = D-glucarate(out) + H(+)(out). The catalysed reaction is (R)-glycerate(in) + H(+)(in) = (R)-glycerate(out) + H(+)(out). Probably involved in the uptake of galactarate and/or D-glucarate. May also transport D-glycerate. The chain is Probable galactarate/D-glucarate transporter GudP from Escherichia coli (strain K12).